The primary structure comprises 460 residues: Muscarinic acetylcholine receptor M1 (460 aa).

The Extracellular segment spans residues 1–22 (MNTSAPPAVSPNITVLAPGKGP). N-linked (GlcNAc...) asparagine glycans are attached at residues Asn-2 and Asn-12. A helical membrane pass occupies residues 23–48 (WQVAFIGITTGLLSLATVTGNLLVLI). At 49–62 (SFKVNTELKTVNNY) the chain is on the cytoplasmic side. The chain crosses the membrane as a helical span at residues 63 to 84 (FLLSLACADLIIGTFSMNLYTT). Residues 85–95 (YLLMGHWALGT) are Extracellular-facing. The chain crosses the membrane as a helical span at residues 96 to 121 (LACDLWLALDYVASNASVMNLLLISF). Cys-98 and Cys-178 are disulfide-bonded. Over 122 to 142 (DRYFSVTRPLSYRAKRTPRRA) the chain is Cytoplasmic. The helical transmembrane segment at 143 to 164 (ALMIGLAWLVSFVLWAPAILFW) threads the bilayer. Residues 165–185 (QYLVGERTVLAGQCYIQFLSQ) lie on the Extracellular side of the membrane. Residues 186–209 (PIITFGTAMAAFYLPVTVMCTLYW) traverse the membrane as a helical segment. At 210-366 (RIYRETENRA…LVKEKKAART (157 aa)) the chain is on the cytoplasmic side. Disordered stretches follow at residues 225 to 259 (LQGS…PGRC), 273 to 297 (SWKE…EEPG), and 310 to 351 (EAQA…QLAK). Thr-230 bears the Phosphothreonine mark. A compositionally biased stretch (low complexity) spans 238 to 247 (SSSSERSQPG). Over residues 328–343 (RPTKKGRDRAGKGQKP) the composition is skewed to basic residues. A helical transmembrane segment spans residues 367-390 (LSAILLAFILTWTPYNIMVLVSTF). Over 391–401 (CKDCVPETLWE) the chain is Extracellular. Residues 402–420 (LGYWLCYVNSTINPMCYAL) form a helical membrane-spanning segment. Residues 421–460 (CNKAFRDTFRLLLLCRWDKRRWRKIPKRPGSVHRTPSRQC) are Cytoplasmic-facing. Thr-428 carries the post-translational modification Phosphothreonine. Residue Ser-451 is modified to Phosphoserine. The residue at position 455 (Thr-455) is a Phosphothreonine. Ser-457 bears the Phosphoserine mark.

This sequence belongs to the G-protein coupled receptor 1 family. Muscarinic acetylcholine receptor subfamily. CHRM1 sub-subfamily. In terms of assembly, interacts with GPRASP2. Interacts with TMEM147.

It localises to the cell membrane. The protein resides in the postsynaptic cell membrane. Its function is as follows. The muscarinic acetylcholine receptor mediates various cellular responses, including inhibition of adenylate cyclase, breakdown of phosphoinositides and modulation of potassium channels through the action of G proteins. Primary transducing effect is Pi turnover. The polypeptide is Muscarinic acetylcholine receptor M1 (CHRM1) (Macaca mulatta (Rhesus macaque)).